The sequence spans 516 residues: L-amino acid oxidase (516 aa).

The N-terminal stretch at 1-18 (MNVFFMFSLLFLAALESC) is a signal peptide. FAD contacts are provided by residues 61–62 (MS), 81–82 (EA), arginine 89, and 105–108 (GPMR). Arginine 108 lines the substrate pocket. The N-linked (GlcNAc...) asparagine glycan is linked to asparagine 190. Residue valine 279 coordinates FAD. N-linked (GlcNAc...) asparagine glycans are attached at residues asparagine 299 and asparagine 404. Cysteines 349 and 430 form a disulfide. Residues glutamate 475 and 482 to 487 (GWIDST) contribute to the FAD site. Residue 482–483 (GW) coordinates substrate.

Belongs to the flavin monoamine oxidase family. FIG1 subfamily. Homodimer; non-covalently linked. FAD is required as a cofactor. Post-translationally, N-glycosylated (14%). The enzymatic activity remains unchanged after deglycosylation. In terms of tissue distribution, expressed by the venom gland.

It localises to the secreted. It carries out the reaction an L-alpha-amino acid + O2 + H2O = a 2-oxocarboxylate + H2O2 + NH4(+). The enzyme catalyses L-leucine + O2 + H2O = 4-methyl-2-oxopentanoate + H2O2 + NH4(+). It catalyses the reaction L-phenylalanine + O2 + H2O = 3-phenylpyruvate + H2O2 + NH4(+). The catalysed reaction is L-tryptophan + O2 + H2O = indole-3-pyruvate + H2O2 + NH4(+). It carries out the reaction L-methionine + O2 + H2O = 4-methylsulfanyl-2-oxobutanoate + H2O2 + NH4(+). The enzyme catalyses L-isoleucine + O2 + H2O = (S)-3-methyl-2-oxopentanoate + H2O2 + NH4(+). Its activity is regulated as follows. Inhibited by the substrate analog N-acetyl tryptophan. Its function is as follows. Catalyzes an oxidative deamination of predominantly hydrophobic and aromatic L-amino acids, thus producing hydrogen peroxide that may contribute to the diverse toxic effects of this enzyme. Is highly active on L-Met&gt;L-Leu&gt;L-Phe&gt;L-Trp=L-Ile. Binds to the cell surface and enables the production of highly localized concentration of hydrogen peroxide in or near the binding interfaces. Does not bind to phospholipids. Induces platelet-rich plasma aggregation, shows cytotoxic effects on some cancer cell lines (B16-F10 (mouse melanoma), PC12 (rat pheochromocytoma), MCF-7 and MDA-MB-231 (human breast carcinoma)) and shows antibacterial activities against both Gram-positive and Gram-negative bacteria. Also exhibits hemorrhage and edema. Does not show cytotoxicity on erythrocytes and peripheral blood mononuclear cells. Its effect on platelets is controversial, since it either induces aggregation or inhibits agonist-induced aggregation. These different effects are probably due to different experimental conditions. The chain is L-amino acid oxidase from Cerastes cerastes (Horned desert viper).